Consider the following 181-residue polypeptide: MQNEVQQALAAFSARYCEAWRQQRGSLPVSEEYIGISSPCIVSTHPDAVEWEPQPFTPEDSLGAVEKALDIVIQPDVHAFYASQYAGDMAARYDDVALTLLQAWSQDDFRRVQENLIGHLVTQKRLKLSPTIFIATLDSELDVISLCNLTGEVVQETLGTRKRRVLAPSLSTFLSQLTPLV.

The protein belongs to the Syd family.

Its subcellular location is the cell inner membrane. Its function is as follows. Interacts with the SecY protein in vivo. May bind preferentially to an uncomplexed state of SecY, thus functioning either as a chelating agent for excess SecY in the cell or as a regulatory factor that negatively controls the translocase function. The polypeptide is Protein Syd (Cronobacter sakazakii (strain ATCC BAA-894) (Enterobacter sakazakii)).